The chain runs to 250 residues: MPAKLSVNLNAIAMLRNRRDLPWPDVRHFGRLALQAGAQGLTVHPRPDQRHVRFSDLPLLRALIDDEFPKAEFNIEGYPSEDFLQLCEEAQPEQVTLVPDDPSQATSDHGWDFAAHQVFLTDVVARLKAAGMRVSLFADGDGNAQAVATAKATGADRIELYTGPYGSCYDAPEKAARELALLGATADAAHALGMGVNGGHDLTIANLPALAERIPFLAEVSIGHALTADALEFGMAETVRRFRRACGELA.

3-amino-2-oxopropyl phosphate is bound by residues N8 and R19. H44 acts as the Proton acceptor in catalysis. R46 and H51 together coordinate 1-deoxy-D-xylulose 5-phosphate. Residue E76 is the Proton acceptor of the active site. T106 contributes to the 1-deoxy-D-xylulose 5-phosphate binding site. The Proton donor role is filled by H200. Residues D201 and 223 to 224 (GH) contribute to the 3-amino-2-oxopropyl phosphate site.

The protein belongs to the PNP synthase family. As to quaternary structure, homooctamer; tetramer of dimers.

It is found in the cytoplasm. It carries out the reaction 3-amino-2-oxopropyl phosphate + 1-deoxy-D-xylulose 5-phosphate = pyridoxine 5'-phosphate + phosphate + 2 H2O + H(+). It participates in cofactor biosynthesis; pyridoxine 5'-phosphate biosynthesis; pyridoxine 5'-phosphate from D-erythrose 4-phosphate: step 5/5. Functionally, catalyzes the complicated ring closure reaction between the two acyclic compounds 1-deoxy-D-xylulose-5-phosphate (DXP) and 3-amino-2-oxopropyl phosphate (1-amino-acetone-3-phosphate or AAP) to form pyridoxine 5'-phosphate (PNP) and inorganic phosphate. This chain is Pyridoxine 5'-phosphate synthase, found in Allorhizobium ampelinum (strain ATCC BAA-846 / DSM 112012 / S4) (Agrobacterium vitis (strain S4)).